We begin with the raw amino-acid sequence, 303 residues long: Methionyl-tRNA formyltransferase (303 aa).

108–111 (SDLP) is a (6S)-5,6,7,8-tetrahydrofolate binding site.

Belongs to the Fmt family.

It catalyses the reaction L-methionyl-tRNA(fMet) + (6R)-10-formyltetrahydrofolate = N-formyl-L-methionyl-tRNA(fMet) + (6S)-5,6,7,8-tetrahydrofolate + H(+). In terms of biological role, attaches a formyl group to the free amino group of methionyl-tRNA(fMet). The formyl group appears to play a dual role in the initiator identity of N-formylmethionyl-tRNA by promoting its recognition by IF2 and preventing the misappropriation of this tRNA by the elongation apparatus. This is Methionyl-tRNA formyltransferase from Rickettsia typhi (strain ATCC VR-144 / Wilmington).